The sequence spans 188 residues: Protein GrpE (188 aa).

A compositionally biased stretch (basic and acidic residues) spans 1-16 (MEERNEQVVEEVKEAQ). Positions 1–31 (MEERNEQVVEEVKEAQVEEAVTPENSEETVE) are disordered.

It belongs to the GrpE family. Homodimer.

It is found in the cytoplasm. Functionally, participates actively in the response to hyperosmotic and heat shock by preventing the aggregation of stress-denatured proteins, in association with DnaK and GrpE. It is the nucleotide exchange factor for DnaK and may function as a thermosensor. Unfolded proteins bind initially to DnaJ; upon interaction with the DnaJ-bound protein, DnaK hydrolyzes its bound ATP, resulting in the formation of a stable complex. GrpE releases ADP from DnaK; ATP binding to DnaK triggers the release of the substrate protein, thus completing the reaction cycle. Several rounds of ATP-dependent interactions between DnaJ, DnaK and GrpE are required for fully efficient folding. This chain is Protein GrpE, found in Bacillus cereus (strain G9842).